Consider the following 209-residue polypeptide: A-type ATP synthase subunit D (209 aa).

Belongs to the V-ATPase D subunit family. Has multiple subunits, A(3), B(3), C, D, E, F, G, I and K(x); there may be a few other subunits as well.

Its subcellular location is the cell membrane. Functionally, component of the A-type ATP synthase that produces ATP from ADP in the presence of a proton gradient across the membrane. In Methanosarcina mazei (strain ATCC BAA-159 / DSM 3647 / Goe1 / Go1 / JCM 11833 / OCM 88) (Methanosarcina frisia), this protein is A-type ATP synthase subunit D.